Here is a 257-residue protein sequence, read N- to C-terminus: Homeobox protein EMX1 (257 aa).

The segment at residues 159–218 is a DNA-binding region (homeobox); that stretch reads PKRIRTAFSPSQLLRLERAFEKNHYVVGAERKQLAGSLSLSETQVKVWFQNRRTKYKRQK. Residues 216–257 are disordered; that stretch reads RQKLEEEGPESEQKKKGSHHINRWRIATKQANGEDIDVTSND. Residues 217–230 show a composition bias toward basic and acidic residues; it reads QKLEEEGPESEQKK.

It belongs to the EMX homeobox family. Interacts with WRD11 (via the N-terminal and the central portion of the protein); the interaction associates EMX1 with GLI3. Cerebral cortex. Expressed in the olfactory bulbs.

The protein localises to the nucleus. Functionally, transcription factor, which in cooperation with EMX2, acts to generate the boundary between the roof and archipallium in the developing brain. May function in combinations with OTX1/2 to specify cell fates in the developing central nervous system. This Mus musculus (Mouse) protein is Homeobox protein EMX1 (Emx1).